The chain runs to 211 residues: N-(5'-phosphoribosyl)anthranilate isomerase (211 aa).

It belongs to the TrpF family.

The enzyme catalyses N-(5-phospho-beta-D-ribosyl)anthranilate = 1-(2-carboxyphenylamino)-1-deoxy-D-ribulose 5-phosphate. The protein operates within amino-acid biosynthesis; L-tryptophan biosynthesis; L-tryptophan from chorismate: step 3/5. This chain is N-(5'-phosphoribosyl)anthranilate isomerase, found in Pseudomonas aeruginosa (strain UCBPP-PA14).